The following is an 843-amino-acid chain: Pentatricopeptide repeat-containing protein At4g21880, mitochondrial (843 aa).

PPR repeat units lie at residues 392–426, 427–461, 462–496, 497–531, 532–562, 564–594, and 598–632; these read SSTS…GLVI, SANI…SVKP, NSET…NLAP, NSSM…DVKP, DSVT…AGVE, NKHV…LEVP, and HNEL…RCPV.

Belongs to the PPR family. P subfamily.

The protein resides in the mitochondrion. The protein is Pentatricopeptide repeat-containing protein At4g21880, mitochondrial of Arabidopsis thaliana (Mouse-ear cress).